The primary structure comprises 98 residues: uncharacterized protein (98 aa).

An N-terminal signal peptide occupies residues 1 to 19; that stretch reads MTERRRALSLAAVVDSINL. A disordered region spans residues 40–98; that stretch reads PPGGSFSGIKRESRRKRPSRNEIYGGGVLEQEVRMRRWSKTASPPVSLHHRPLGPARKP. The span at 87-98 shows a compositional bias: basic residues; that stretch reads LHHRPLGPARKP.

This is an uncharacterized protein from Homo sapiens (Human).